Here is a 1729-residue protein sequence, read N- to C-terminus: Zinc finger CCCH domain-containing protein 13 (1729 aa).

Disordered stretches follow at residues methionine 1–threonine 40 and cysteine 57–isoleucine 156. Residues valine 10–arginine 23 are compositionally biased toward polar residues. Residues serine 36–serine 64 form a C3H1-type zinc finger. 2 positions are modified to phosphoserine: serine 64 and serine 77. Positions arginine 76 to glutamate 136 are enriched in basic and acidic residues. Positions histidine 162–glutamate 196 form a coiled coil. A Glycyl lysine isopeptide (Lys-Gly) (interchain with G-Cter in SUMO2) cross-link involves residue lysine 179. Residues glutamine 182–isoleucine 193 show a composition bias toward basic and acidic residues. Disordered stretches follow at residues glutamine 182 to valine 528 and aspartate 581 to aspartate 1527. Phosphoserine occurs at positions 198, 207, 209, and 211. Low complexity predominate over residues serine 204 to arginine 213. Positions lysine 214–serine 224 are enriched in basic residues. Phosphoserine is present on serine 242. Over residues leucine 245–asparagine 254 the composition is skewed to polar residues. Threonine 263 carries the post-translational modification Phosphothreonine. Residue serine 265 is modified to Phosphoserine. Residues lysine 283 to arginine 315 are compositionally biased toward basic and acidic residues. Phosphoserine occurs at positions 316, 318, 324, and 327. Positions glutamine 321–serine 345 are enriched in low complexity. Residues threonine 353 and threonine 363 each carry the phosphothreonine modification. A compositionally biased stretch (polar residues) spans tyrosine 358 to arginine 368. Phosphoserine is present on residues serine 369, serine 371, and serine 380. Composition is skewed to basic and acidic residues over residues proline 393–valine 528 and aspartate 581–serine 636. The span at threonine 639 to histidine 654 shows a compositional bias: polar residues. A compositionally biased stretch (basic and acidic residues) spans aspartate 655–arginine 701. Serine 704 carries the phosphoserine modification. Residues isoleucine 706–glutamate 865 are a coiled coil. Residues glycine 710 to lysine 897 show a composition bias toward basic and acidic residues. A phosphoserine mark is found at serine 907, serine 909, serine 913, serine 921, serine 924, serine 929, serine 949, serine 951, and serine 953. Positions histidine 920–arginine 938 are enriched in basic and acidic residues. A compositionally biased stretch (basic and acidic residues) spans leucine 957 to lysine 1035. A Phosphothreonine modification is found at threonine 958. Basic residues predominate over residues lysine 1036–lysine 1046. Residues lysine 1047–serine 1065 are compositionally biased toward basic and acidic residues. Phosphoserine occurs at positions 1069, 1086, 1090, and 1093. Positions lysine 1072–serine 1086 are enriched in basic residues. The residue at position 1109 (threonine 1109) is a Phosphothreonine. 2 stretches are compositionally biased toward basic and acidic residues: residues isoleucine 1114–asparagine 1137 and proline 1149–histidine 1159. 2 stretches are compositionally biased toward low complexity: residues threonine 1160–leucine 1176 and alanine 1184–serine 1218. Basic and acidic residues predominate over residues alanine 1228–arginine 1253. 4 positions are modified to phosphoserine: serine 1256, serine 1259, serine 1273, and serine 1275. Basic and acidic residues predominate over residues serine 1278–serine 1288. A Phosphoserine modification is found at serine 1295. Composition is skewed to basic and acidic residues over residues glycine 1296–valine 1351 and aspartate 1359–phenylalanine 1440. Serine 1427, serine 1443, serine 1447, serine 1467, serine 1470, serine 1499, and serine 1526 each carry phosphoserine. Composition is skewed to basic and acidic residues over residues serine 1447–leucine 1482 and aspartate 1490–serine 1499.

Belongs to the ZC3H13 family. In terms of assembly, component of the WMM complex, a N6-methyltransferase complex composed of a catalytic subcomplex, named MAC, and of an associated subcomplex, named MACOM. The MAC subcomplex is composed of METTL3 and METTL14. The MACOM subcomplex is composed of WTAP, ZC3H13, CBLL1/HAKAI, VIRMA, and, in some cases of RBM15 (RBM15 or RBM15B). Also a component of a MACOM-like complex, named WTAP complex, composed of WTAP, ZC3H13, CBLL1/HAKAI, VIRMA, RBM15, BCLAF1 and THRAP3.

It localises to the nucleus speckle. It is found in the nucleus. Its subcellular location is the nucleoplasm. Associated component of the WMM complex, a complex that mediates N6-methyladenosine (m6A) methylation of RNAs, a modification that plays a role in the efficiency of mRNA splicing and RNA processing. Acts as a key regulator of m6A methylation by promoting m6A methylation of mRNAs at the 3'-UTR. Controls embryonic stem cells (ESCs) pluripotency via its role in m6A methylation. In the WMM complex, anchors component of the MACOM subcomplex in the nucleus. Also required for bridging WTAP to the RNA-binding component RBM15 (RBM15 or RBM15B). The chain is Zinc finger CCCH domain-containing protein 13 from Mus musculus (Mouse).